The following is a 92-amino-acid chain: Small ribosomal subunit protein uS19c (92 aa).

It belongs to the universal ribosomal protein uS19 family.

It is found in the plastid. Its subcellular location is the chloroplast. Protein S19 forms a complex with S13 that binds strongly to the 16S ribosomal RNA. This Chloranthus spicatus (Chulantree) protein is Small ribosomal subunit protein uS19c.